The chain runs to 72 residues: Putative D-serine transporter DsdX-like protein (72 aa).

The polypeptide is Putative D-serine transporter DsdX-like protein (dsdX) (Escherichia coli O157:H7).